The primary structure comprises 292 residues: S-adenosyl-L-methionine-dependent Diels-Alderase iccD (292 aa).

Residues 240 to 262 (LPVVRMFYVVLLVPYLFVRLLGI) traverse the membrane as a helical segment.

Belongs to the class I-like SAM-binding methyltransferase superfamily. Erg6/SMT family. S-adenosyl-L-methionine serves as cofactor.

It localises to the membrane. The enzyme catalyses 3-[(2E,4E,8S,10E,12Z)-4,8-dimethyltetradeca-2,4,10,12-tetraenoyl]-4-hydroxy-5-(4-hydroxyphenyl)-1,2-dihydropyridin-2-one = 8-epi-ilicicolin H. It participates in mycotoxin biosynthesis. In terms of biological role, S-adenosyl-l-methionine-dependent Diels-Alderase; part of the gene cluster that mediates the biosynthesis of ilicicolin H, a 4-hydroxy-2-pyridonealkaloid that has potent and broad antifungal activities by inhibiting the mitochondrial respiration chain. IccD catalyzes the Diels-Alder reaction that converts the acyclic 2-pyridone intermediate to 8-epi-ilicicolin H. The biosynthesis of ilicicolin H starts with formation of the tetramic acid by the hybrid PKS-NRPS synthetase iccA with the partnering trans-enoyl reductase iccB since iccA lacks a designated enoylreductase (ER) domain. The cytochrome P450 monooxygenase iccC then catalyzes the ring expansion of the tetramate to the acyclic 2-pyridone. The pericyclase iccD further converts the acyclic 2-pyridone into 8-epi-ilicicolin H. Finally, the epimerase iccE converts 8-epi-ilicicolin H into ilicicolin H via epimerization. IccA to iccE are sufficient for ilicicolin H biosynthesis and the roles of the remaining enzymes, iccF, iccG and iccH within the pathway have still to be determined. The chain is S-adenosyl-L-methionine-dependent Diels-Alderase iccD from Talaromyces variabilis (Penicillium variabile).